Here is a 151-residue protein sequence, read N- to C-terminus: Ribosome maturation factor RimP (151 aa).

This sequence belongs to the RimP family.

The protein localises to the cytoplasm. Its function is as follows. Required for maturation of 30S ribosomal subunits. This chain is Ribosome maturation factor RimP, found in Saccharophagus degradans (strain 2-40 / ATCC 43961 / DSM 17024).